The following is a 377-amino-acid chain: All-trans-retinol dehydrogenase [NAD(+)] ADH4 (377 aa).

Cysteine 47 contributes to the Zn(2+) binding site. Threonine 49 lines the NAD(+) pocket. 6 residues coordinate Zn(2+): histidine 68, cysteine 98, cysteine 101, cysteine 104, cysteine 112, and cysteine 179. Residues 204-209 (GLGCVG), aspartate 228, lysine 233, 297-299 (VGA), 320-322 (TFF), and arginine 372 each bind NAD(+).

Belongs to the zinc-containing alcohol dehydrogenase family. Class-II subfamily. Dimer. Requires Zn(2+) as cofactor. As to expression, liver specific.

The protein localises to the cytoplasm. The catalysed reaction is all-trans-retinol + NAD(+) = all-trans-retinal + NADH + H(+). It carries out the reaction 9-cis-retinol + NAD(+) = 9-cis-retinal + NADH + H(+). It catalyses the reaction 20-hydroxy-(5Z,8Z,11Z,14Z)-eicosatetraenoate + NAD(+) = 20-oxo-(5Z,8Z,11Z,14Z)-eicosatetraenoate + NADH + H(+). The enzyme catalyses 20-oxo-(5Z,8Z,11Z,14Z)-eicosatetraenoate + NAD(+) + H2O = (5Z,8Z,11Z,14Z)-eicosatetraenedioate + NADH + 2 H(+). The catalysed reaction is 1,4-benzoquinone + NADH + H(+) = hydroquinone + NAD(+). With respect to regulation, oxidation of 20-HETE is inhibited by low concentrations of N-heptylformamide. Oxidation of 20-HETE is a decreased by 55-65% by either all-trans-retinol or all-trans-retinoic acid. Strongly inhibited by omega-hydroxy fatty acids. Functionally, catalyzes the NAD-dependent oxidation of either all-trans-retinol or 9-cis-retinol. Also oxidizes long chain omega-hydroxy fatty acids, such as 20-HETE, producing both the intermediate aldehyde, 20-oxoarachidonate and the end product, a dicarboxylic acid, (5Z,8Z,11Z,14Z)-eicosatetraenedioate. Also catalyzes the reduction of benzoquinones. The protein is All-trans-retinol dehydrogenase [NAD(+)] ADH4 of Mus musculus (Mouse).